The following is a 317-amino-acid chain: Putative toluene-4-sulfonate monooxygenase system reductase subunit TsaB2 (317 aa).

The 103-residue stretch at 4 to 106 (DVPVTVAAVR…SAPRNLFEMA (103 aa)) folds into the FAD-binding FR-type domain. 110–220 (RRVLLLAGGI…PGSVRMERFK (111 aa)) contributes to the NAD(+) binding site. A 2Fe-2S ferredoxin-type domain is found at 232-317 (FELVLQRAGL…CGGGRLVLDI (86 aa)). [2Fe-2S] cluster-binding residues include Cys266, Cys271, and Cys274.

As to quaternary structure, monomer. Part of the p-toluenesulfonate methyl-monooxygenase complex TsaBM, comprising the reductase TsaB and the oxygenase TsaM. FMN serves as cofactor.

Involved in the toluene-4-sulfonate degradation pathway. This is Putative toluene-4-sulfonate monooxygenase system reductase subunit TsaB2 (tsaB2) from Comamonas testosteroni (Pseudomonas testosteroni).